A 513-amino-acid chain; its full sequence is 2,3-bisphosphoglycerate-independent phosphoglycerate mutase (513 aa).

Residues Asp12 and Ser62 each contribute to the Mn(2+) site. Ser62 acts as the Phosphoserine intermediate in catalysis. Residues His123, 153-154 (RD), Arg185, Arg191, 260-263 (RPDR), and Lys333 contribute to the substrate site. Mn(2+) contacts are provided by Asp400, His404, Asp441, His442, and His460.

The protein belongs to the BPG-independent phosphoglycerate mutase family. In terms of assembly, monomer. Mn(2+) serves as cofactor.

It catalyses the reaction (2R)-2-phosphoglycerate = (2R)-3-phosphoglycerate. It participates in carbohydrate degradation; glycolysis; pyruvate from D-glyceraldehyde 3-phosphate: step 3/5. Catalyzes the interconversion of 2-phosphoglycerate and 3-phosphoglycerate. The chain is 2,3-bisphosphoglycerate-independent phosphoglycerate mutase from Clostridium tetani (strain Massachusetts / E88).